The following is a 206-amino-acid chain: Protein SYM1 (206 aa).

The next 3 membrane-spanning stretches (helical) occupy residues 16 to 36 (PLITNIITTGFLFGSGDYLAQ), 103 to 123 (LVFAPFIGIPLYYSVMSVLEF), and 155 to 175 (LFNFALIPVQFRLLVVNIFSI).

It belongs to the peroxisomal membrane protein PXMP2/4 family.

Its subcellular location is the mitochondrion inner membrane. In terms of biological role, may be involved in cellular response to stress. Required to maintain mitochondrial DNA (mtDNA) integrity and stability. In Debaryomyces hansenii (strain ATCC 36239 / CBS 767 / BCRC 21394 / JCM 1990 / NBRC 0083 / IGC 2968) (Yeast), this protein is Protein SYM1 (SYM1).